Consider the following 557-residue polypeptide: Eukaryotic translation initiation factor 3 subunit D-2 (557 aa).

The interval 292-306 (QFDMLTVNETALEPP) is RNA gate. Positions 533 to 557 (FDSDNNDGEETSDDRPFLNSKDNKL) are disordered. Basic and acidic residues predominate over residues 545 to 557 (DDRPFLNSKDNKL).

The protein belongs to the eIF-3 subunit D family. Component of the eukaryotic translation initiation factor 3 (eIF-3) complex. The eIF-3 complex interacts with pix.

Its subcellular location is the cytoplasm. In terms of biological role, mRNA cap-binding component of the eukaryotic translation initiation factor 3 (eIF-3) complex, which is involved in protein synthesis of a specialized repertoire of mRNAs and, together with other initiation factors, stimulates binding of mRNA and methionyl-tRNAi to the 40S ribosome. The eIF-3 complex specifically targets and initiates translation of a subset of mRNAs involved in cell proliferation. In the eIF-3 complex, eif3d specifically recognizes and binds the 7-methylguanosine cap of a subset of mRNAs. The chain is Eukaryotic translation initiation factor 3 subunit D-2 from Drosophila grimshawi (Hawaiian fruit fly).